Reading from the N-terminus, the 422-residue chain is Enolase (422 aa).

Residue Ser41 coordinates Mg(2+). Glu163 serves as a coordination point for (2R)-2-phosphoglycerate. Glu204 serves as the catalytic Proton donor. Mg(2+) contacts are provided by Asp241, Glu284, and Asp311. Lys336 (proton acceptor) is an active-site residue. Residues Arg365, Ser366, and Lys387 each coordinate (2R)-2-phosphoglycerate.

It belongs to the enolase family. In terms of assembly, homodimer. Component of the RNA degradosome, a multiprotein complex involved in RNA processing and mRNA degradation. It depends on Mg(2+) as a cofactor.

It localises to the cytoplasm. It is found in the secreted. The protein localises to the cell surface. The catalysed reaction is (2R)-2-phosphoglycerate = phosphoenolpyruvate + H2O. Its pathway is carbohydrate degradation; glycolysis; pyruvate from D-glyceraldehyde 3-phosphate: step 4/5. Functionally, catalyzes the reversible conversion of 2-phosphoglycerate (2-PG) into phosphoenolpyruvate (PEP). It is essential for the degradation of carbohydrates via glycolysis. This Legionella pneumophila subsp. pneumophila (strain Philadelphia 1 / ATCC 33152 / DSM 7513) protein is Enolase.